The following is a 134-amino-acid chain: MIIGIGSDLIDIRRVEKSIERFGTRFTERCFTDIERAKSEGRKNKAASYAKRFAAKEACSKALGTGLAQGVFWRDMGVVNLPSGKPTMQLTGGAARRLAAMLPENHRAAIHLTITDDFPLAQAFVIIEALPIAG.

Mg(2+) contacts are provided by aspartate 8 and glutamate 57.

It belongs to the P-Pant transferase superfamily. AcpS family. The cofactor is Mg(2+).

The protein resides in the cytoplasm. The catalysed reaction is apo-[ACP] + CoA = holo-[ACP] + adenosine 3',5'-bisphosphate + H(+). Transfers the 4'-phosphopantetheine moiety from coenzyme A to a Ser of acyl-carrier-protein. The polypeptide is Holo-[acyl-carrier-protein] synthase (Rhizobium rhizogenes (strain K84 / ATCC BAA-868) (Agrobacterium radiobacter)).